The chain runs to 393 residues: Formate-dependent phosphoribosylglycinamide formyltransferase (393 aa).

Residues 22–23 and Glu-82 contribute to the N(1)-(5-phospho-beta-D-ribosyl)glycinamide site; that span reads EL. ATP is bound by residues Arg-114, Lys-155, 160-165, 195-198, and Glu-203; these read SSGKGQ and EGFI. The ATP-grasp domain occupies 119 to 308; the sequence is RLAAEELDLP…QFALHARAIL (190 aa). Glu-267 and Glu-279 together coordinate Mg(2+). N(1)-(5-phospho-beta-D-ribosyl)glycinamide-binding positions include Asp-286, Lys-356, and 363-364; that span reads RR.

It belongs to the PurK/PurT family. As to quaternary structure, homodimer.

It carries out the reaction N(1)-(5-phospho-beta-D-ribosyl)glycinamide + formate + ATP = N(2)-formyl-N(1)-(5-phospho-beta-D-ribosyl)glycinamide + ADP + phosphate + H(+). It functions in the pathway purine metabolism; IMP biosynthesis via de novo pathway; N(2)-formyl-N(1)-(5-phospho-D-ribosyl)glycinamide from N(1)-(5-phospho-D-ribosyl)glycinamide (formate route): step 1/1. Involved in the de novo purine biosynthesis. Catalyzes the transfer of formate to 5-phospho-ribosyl-glycinamide (GAR), producing 5-phospho-ribosyl-N-formylglycinamide (FGAR). Formate is provided by PurU via hydrolysis of 10-formyl-tetrahydrofolate. The polypeptide is Formate-dependent phosphoribosylglycinamide formyltransferase (Pseudomonas fluorescens (strain Pf0-1)).